The chain runs to 204 residues: Peptidyl-tRNA hydrolase 2 (204 aa).

A tRNA-binding site is contributed by Tyr37. His42 acts as the Proton acceptor in catalysis. TRNA contacts are provided by Phe86, Asn88, and Asn134.

It belongs to the PTH family. In terms of assembly, monomer.

The protein localises to the cytoplasm. The enzyme catalyses an N-acyl-L-alpha-aminoacyl-tRNA + H2O = an N-acyl-L-amino acid + a tRNA + H(+). Its function is as follows. Hydrolyzes ribosome-free peptidyl-tRNAs (with 1 or more amino acids incorporated), which drop off the ribosome during protein synthesis, or as a result of ribosome stalling. In terms of biological role, catalyzes the release of premature peptidyl moieties from peptidyl-tRNA molecules trapped in stalled 50S ribosomal subunits, and thus maintains levels of free tRNAs and 50S ribosomes. In Corynebacterium glutamicum (strain ATCC 13032 / DSM 20300 / JCM 1318 / BCRC 11384 / CCUG 27702 / LMG 3730 / NBRC 12168 / NCIMB 10025 / NRRL B-2784 / 534), this protein is Peptidyl-tRNA hydrolase 2.